A 55-amino-acid chain; its full sequence is MPKCPKCGAEVKEPIKTWVLAPKGRKGVIIGLFRCPNGHYFRAKVGEAPPKKEAA.

It belongs to the Cren7 family. Monomer. In terms of processing, methylated at multiple sites, to varying extents.

It localises to the chromosome. Its subcellular location is the cytoplasm. In terms of biological role, a chromatin protein, binds double-stranded DNA without sequence specificity. Constrains negative DNA supercoils. This chain is Chromatin protein Cren7, found in Ignicoccus hospitalis (strain KIN4/I / DSM 18386 / JCM 14125).